Reading from the N-terminus, the 238-residue chain is MRPNDRAVDQIRPIKITRNYTAYAEGSVLVEFGNTKVLCNATVEENVPRWLKGQGKGWVTAEYGMLPRATHTRNRREAASGKQGGRTMEIQRLIARSLRAVVDLKVMGEIMITVDCDVIQADGGTRTASISGASVAMADAINSLLASGKLKKNPMKGHVAAVSVGIVGAQALCDLEYVEDSAADTDMNVVMTEDGKMIEIQGTAEGEPFSHEELMQLLALANKGIADIVEAQKAALAD.

Phosphate-binding positions include Arg-86 and 124–126; that span reads GTR.

Belongs to the RNase PH family. Homohexameric ring arranged as a trimer of dimers.

It catalyses the reaction tRNA(n+1) + phosphate = tRNA(n) + a ribonucleoside 5'-diphosphate. Phosphorolytic 3'-5' exoribonuclease that plays an important role in tRNA 3'-end maturation. Removes nucleotide residues following the 3'-CCA terminus of tRNAs; can also add nucleotides to the ends of RNA molecules by using nucleoside diphosphates as substrates, but this may not be physiologically important. Probably plays a role in initiation of 16S rRNA degradation (leading to ribosome degradation) during starvation. In Vibrio atlanticus (strain LGP32) (Vibrio splendidus (strain Mel32)), this protein is Ribonuclease PH.